The sequence spans 217 residues: MMSLGLVGRKVGMTRIFTAEGDSIPVTVLDVSDNRVTQIKTVETDGYTAVQVAFGSRRASRVTKPLAGHLAKAGVEAGEILKEFRIDAAKAAELSNGAVVGVDLFEVGQKVDVQGVSIGKGYAGTIKRYNFSSGRATHGNSRSHNVPGSIGMAQDPGRVFPGKRMTGHMGDETVTVQNLEIARIDAERKLLLVKGAIPGAKGGKVFVTPAVKTKGAK.

Polar residues predominate over residues 134–146 (GRATHGNSRSHNV). A disordered region spans residues 134–154 (GRATHGNSRSHNVPGSIGMAQ). Q154 bears the N5-methylglutamine mark.

Belongs to the universal ribosomal protein uL3 family. In terms of assembly, part of the 50S ribosomal subunit. Forms a cluster with proteins L14 and L19. Post-translationally, methylated by PrmB.

In terms of biological role, one of the primary rRNA binding proteins, it binds directly near the 3'-end of the 23S rRNA, where it nucleates assembly of the 50S subunit. In Burkholderia lata (strain ATCC 17760 / DSM 23089 / LMG 22485 / NCIMB 9086 / R18194 / 383), this protein is Large ribosomal subunit protein uL3.